A 129-amino-acid chain; its full sequence is Small ribosomal subunit protein uS11 (129 aa).

Belongs to the universal ribosomal protein uS11 family. In terms of assembly, part of the 30S ribosomal subunit. Interacts with proteins S7 and S18. Binds to IF-3.

Located on the platform of the 30S subunit, it bridges several disparate RNA helices of the 16S rRNA. Forms part of the Shine-Dalgarno cleft in the 70S ribosome. The sequence is that of Small ribosomal subunit protein uS11 from Geobacillus sp. (strain WCH70).